Consider the following 151-residue polypeptide: Transcriptional repressor NrdR (151 aa).

A zinc finger lies at 3–34 (CPFCGYSESKVVDSRSTEDNMAIRRRRECLEC). The 91-residue stretch at 49–139 (ILVIKKDSSR…VYRQFKDINT (91 aa)) folds into the ATP-cone domain.

It belongs to the NrdR family. It depends on Zn(2+) as a cofactor.

In terms of biological role, negatively regulates transcription of bacterial ribonucleotide reductase nrd genes and operons by binding to NrdR-boxes. This chain is Transcriptional repressor NrdR, found in Clostridium acetobutylicum (strain ATCC 824 / DSM 792 / JCM 1419 / IAM 19013 / LMG 5710 / NBRC 13948 / NRRL B-527 / VKM B-1787 / 2291 / W).